Reading from the N-terminus, the 373-residue chain is Ribonuclease D (373 aa).

Positions tyrosine 3–glutamate 171 constitute a 3'-5' exonuclease domain. Residues arginine 210–alanine 289 form the HRDC domain.

Belongs to the RNase D family. A divalent metal cation is required as a cofactor.

The protein localises to the cytoplasm. The catalysed reaction is Exonucleolytic cleavage that removes extra residues from the 3'-terminus of tRNA to produce 5'-mononucleotides.. Its function is as follows. Exonuclease involved in the 3' processing of various precursor tRNAs. Initiates hydrolysis at the 3'-terminus of an RNA molecule and releases 5'-mononucleotides. The sequence is that of Ribonuclease D from Serratia proteamaculans (strain 568).